Consider the following 1186-residue polypeptide: Tricalbin-1 (1186 aa).

The segment at 1 to 50 (MAKEDTGVTAPKKPETAQVANINGIDKLEPPKTKEETESSKSVSSEKAAH) is disordered. The Cytoplasmic portion of the chain corresponds to 1–106 (MAKEDTGVTA…NIIPDSLYGD (106 aa)). Residues 26–39 (DKLEPPKTKEETES) are compositionally biased toward basic and acidic residues. The helical transmembrane segment at 107 to 127 (WYHSVAIFFIGGVASFALGHY) threads the bilayer. Position 128 (Lys128) is a topological domain, extracellular. The helical transmembrane segment at 129 to 149 (FSMGSAFFVIVITSLLYRTSA) threads the bilayer. Over 150–1186 (KKYRGSIREL…HEMGEEETKF (1037 aa)) the chain is Cytoplasmic. An SMP-LTD domain is found at 172–375 (DYESLEWLNA…PPFSLQLNIP (204 aa)). C2 domains are found at residues 366–487 (PPFS…RNLK), 512–636 (EKKL…IKIT), and 640–757 (RPVR…DKYE). The stretch at 795 to 822 (LEEIQDLDKVNKKKKALELRKSAIDEKK) forms a coiled coil. The C2 4 domain maps to 976 to 1094 (PIDTKQLPAN…KVEGTTELDV (119 aa)). Ser1000 is subject to Phosphoserine. The Ca(2+) site is built by Asp1008, Asp1014, Asp1064, Asp1066, Ser1069, and Asp1072.

This sequence belongs to the tricalbin family. As to quaternary structure, interacts with TCB2 via its C-terminal domain. Ca(2+) is required as a cofactor.

The protein localises to the cell membrane. It localises to the endoplasmic reticulum membrane. Its function is as follows. May play a role in membrane trafficking. The chain is Tricalbin-1 (TCB1) from Saccharomyces cerevisiae (strain ATCC 204508 / S288c) (Baker's yeast).